Here is a 125-residue protein sequence, read N- to C-terminus: Salivary protein 15 Ipac-1 (125 aa).

Positions 1-15 (MKVVCIILLFGIAAA) are cleaved as a signal peptide. N-linked (GlcNAc...) asparagine glycans are attached at residues N82 and N94. Residues 106 to 125 (GPSGQTCADKSKCVGHIPGC) form a CD4-binding region.

It belongs to the salp15 family. Interacts with host CD4. Interacts with host DC-SIGN (CD209). Interacts with Borrelia outer surface protein C (OspC). In terms of tissue distribution, expressed in salivary glands.

The protein resides in the secreted. Its function is as follows. Salivary tick protein that downregulates host immune system by binding to both dendritic cells, and CD4(+) T cells. Specifically binds to the CD4 coreceptor on T cells. This interaction prevents the activation of the Src kinase, Lck, and its downstream substrate Zap-70, and results in deficient activation of PLCgamma1, the repression of calcium fluxes triggered by T-cell antigen receptor (TCR) ligation, and a subsequent reduction in interleukin-2 production. This salivary protein also binds to DC-SIGN (CD209) on dendritic cells (DC) and activates the Raf-1 kinase/MEK signaling pathway that results in down-regulating expression of pro-inflammatory cytokines. Furthermore, it inhibits T cell proliferation induced by DCs. It also inhibits in vitro keratinocyte inflammation induced by Borrelia burgdorferi or by the major outer surface protein (OspC) of Borrelia. In addition, it downregulates chemokines and monocyte chemoattractant protein 1, as well as several antimicrobial peptides such as defensins, cathelicidin, psoriasin, and RNase 7. Apart from its immunomodulatory activities, it is also associated with protection of Borrelia spirochetes from antibody-mediated killing through its binding to OspC. In vivo, tests on different immune disease animal models show promising therapeutic results, e.g., in inhibiting HIV infection, experimental autoimmune encephalomyelitis, transplantation rejection, and asthma. The polypeptide is Salivary protein 15 Ipac-1 (Ixodes pacificus (Western black-legged tick)).